We begin with the raw amino-acid sequence, 72 residues long: Translation initiation factor IF-1 (72 aa).

Residues 1-72 (MAKDDVIVVD…DKGRITHRYK (72 aa)) form the S1-like domain.

Belongs to the IF-1 family. In terms of assembly, component of the 30S ribosomal translation pre-initiation complex which assembles on the 30S ribosome in the order IF-2 and IF-3, IF-1 and N-formylmethionyl-tRNA(fMet); mRNA recruitment can occur at any time during PIC assembly.

It is found in the cytoplasm. One of the essential components for the initiation of protein synthesis. Stabilizes the binding of IF-2 and IF-3 on the 30S subunit to which N-formylmethionyl-tRNA(fMet) subsequently binds. Helps modulate mRNA selection, yielding the 30S pre-initiation complex (PIC). Upon addition of the 50S ribosomal subunit IF-1, IF-2 and IF-3 are released leaving the mature 70S translation initiation complex. The protein is Translation initiation factor IF-1 of Aliarcobacter butzleri (strain RM4018) (Arcobacter butzleri).